Here is a 446-residue protein sequence, read N- to C-terminus: Calcium-binding and coiled-coil domain-containing protein 2 (446 aa).

A CLIR motif is present at residues 133–136 (ILVV). A coiled-coil region spans residues 137-349 (TTQGEVEEIE…RENSRLLSYM (213 aa)). An LIR-like motif is present at residues 203 to 206 (DYWE). A disordered region spans residues 362 to 390 (TSDEGGARQNPGLAYGNPYSGIQESSSPS). An interaction with LGALS8 region spans residues 371–381 (NPGLAYGNPYS). Residues 381 to 390 (SGIQESSSPS) show a composition bias toward polar residues. Positions 395–446 (KKCPICKADDICDHTLEQQQMQPLCFNCPICDKIFPATEKQIFEDHVFCHSL) are interaction with MYO6. A UBZ1-type zinc finger spans residues 419–444 (CFNCPICDKIFPATEKQIFEDHVFCH). Positions 422, 425, 440, and 444 each coordinate Zn(2+). Position 445 is a phosphoserine (serine 445).

The protein belongs to the CALCOCO family. Dimer. Part of a complex consisting of CALCOCO2, TAX1BP1 and MYO6. Interacts with MYO6. Interacts with GEMIN4. Interacts with ATG8 family members MAP1LC3A, MAP1LC3B, GABARAP, GABARAPL1 and GABARAPL2. Interacts with ATG8 family member MAP1LC3C. Interacts with LGALS8. Interacts with TOM1; the interaction is indirect and is mediated by MYO6, which acts as a bridge between TOM1 and CALCOCO2. Interacts with AZI2. In terms of assembly, (Microbial infection) Interacts with Lassa virus protein Z. As to quaternary structure, (Microbial infection) Interacts with Mopeia virus protein Z. (Microbial infection) Cleaved by S.pyogenes SpeB protease; leading to its degradation. Degradation by SpeB prevents autophagy, promoting to S.pyogenes intracellular replication. As to expression, expressed in all tissues tested with highest expression in skeletal muscle and lowest in brain.

The protein resides in the cytoplasm. Its subcellular location is the perinuclear region. The protein localises to the cytoskeleton. It is found in the cytoplasmic vesicle. It localises to the autophagosome membrane. Xenophagy-specific receptor required for autophagy-mediated intracellular bacteria degradation. Acts as an effector protein of galectin-sensed membrane damage that restricts the proliferation of infecting pathogens such as Salmonella typhimurium upon entry into the cytosol by targeting LGALS8-associated bacteria for autophagy. Initially orchestrates bacteria targeting to autophagosomes and subsequently ensures pathogen degradation by regulating pathogen-containing autophagosome maturation. Bacteria targeting to autophagosomes relies on its interaction with MAP1LC3A, MAP1LC3B and/or GABARAPL2, whereas regulation of pathogen-containing autophagosome maturation requires the interaction with MAP3LC3C. May play a role in ruffle formation and actin cytoskeleton organization and seems to negatively regulate constitutive secretion. In Homo sapiens (Human), this protein is Calcium-binding and coiled-coil domain-containing protein 2 (CALCOCO2).